The primary structure comprises 301 residues: Methionyl-tRNA formyltransferase (301 aa).

A (6S)-5,6,7,8-tetrahydrofolate-binding site is contributed by 110–113 (SLLP).

This sequence belongs to the Fmt family.

It catalyses the reaction L-methionyl-tRNA(fMet) + (6R)-10-formyltetrahydrofolate = N-formyl-L-methionyl-tRNA(fMet) + (6S)-5,6,7,8-tetrahydrofolate + H(+). Functionally, attaches a formyl group to the free amino group of methionyl-tRNA(fMet). The formyl group appears to play a dual role in the initiator identity of N-formylmethionyl-tRNA by promoting its recognition by IF2 and preventing the misappropriation of this tRNA by the elongation apparatus. In Anaplasma phagocytophilum (strain HZ), this protein is Methionyl-tRNA formyltransferase.